A 63-amino-acid chain; its full sequence is Anaphase-promoting complex subunit 13 (63 aa).

The tract at residues 36–63 (KTDDTEETNQETQQADAETWRDLALDTQ) is disordered. Residues 53–63 (ETWRDLALDTQ) are compositionally biased toward basic and acidic residues.

It belongs to the APC13 family. As to quaternary structure, component of the anaphase promoting complex/cyclosome (APC/C) complex. In terms of tissue distribution, expressed constitutively in roots, leaves, stems, buds, flowers, and seeds.

Its subcellular location is the nucleus. It participates in protein modification; protein ubiquitination. Functionally, component of the anaphase promoting complex/cyclosome (APC/C), a cell cycle-regulated E3 ubiquitin ligase that controls progression through mitosis and the G1 phase of the cell cycle. The APC/C complex acts by mediating ubiquitination and subsequent degradation of target proteins. Regulates global growth and development, including phyllotaxis and apical dominance. Required for pollen maturation. Promotes (pri) miRNA transcription of each MIR159 genes. In Arabidopsis thaliana (Mouse-ear cress), this protein is Anaphase-promoting complex subunit 13.